A 174-amino-acid polypeptide reads, in one-letter code: von Hippel-Lindau tumor suppressor homolog (174 aa).

It belongs to the VHL family. As to quaternary structure, interacts with hif-1 (hydroxylated on 'Pro-621'); the interaction induces hif-1 degradation. May be a component of the cullin E3 ubiquitin ligase complex.

It participates in protein modification; protein ubiquitination. Its function is as follows. Involved in the response to variation in environmental oxygen levels by targeting the hypoxia-inducible transcription factor hif-1 for proteasomal degradation when oxygen levels are normal (around 20%). By regulating hif-1 expression, plays a role in iron homeostasis, aging, heat acclimation and progeny size. Mediates resistance to enteropathogenic E.coli. Mediates susceptibility to B.thuringiensis pore-forming toxins. Not involved in P.aeruginosa susceptibility. The sequence is that of von Hippel-Lindau tumor suppressor homolog from Caenorhabditis elegans.